We begin with the raw amino-acid sequence, 691 residues long: Elongation factor G (691 aa).

One can recognise a tr-type G domain in the interval 8–283 (EKQRNIGIMA…AVVQYLPSPL (276 aa)). GTP contacts are provided by residues 17 to 24 (AHIDAGKT), 81 to 85 (DTPGH), and 135 to 138 (NKMD).

The protein belongs to the TRAFAC class translation factor GTPase superfamily. Classic translation factor GTPase family. EF-G/EF-2 subfamily.

The protein resides in the cytoplasm. Functionally, catalyzes the GTP-dependent ribosomal translocation step during translation elongation. During this step, the ribosome changes from the pre-translocational (PRE) to the post-translocational (POST) state as the newly formed A-site-bound peptidyl-tRNA and P-site-bound deacylated tRNA move to the P and E sites, respectively. Catalyzes the coordinated movement of the two tRNA molecules, the mRNA and conformational changes in the ribosome. The chain is Elongation factor G from Lawsonia intracellularis (strain PHE/MN1-00).